We begin with the raw amino-acid sequence, 116 residues long: Small ribosomal subunit protein uS11m (116 aa).

It belongs to the universal ribosomal protein uS11 family.

The protein localises to the mitochondrion. This chain is Small ribosomal subunit protein uS11m (RPS11), found in Chondrus crispus (Carrageen Irish moss).